The primary structure comprises 1413 residues: ABC transporter G family member 33 (1413 aa).

Low complexity predominate over residues 1-10; that stretch reads MGSSFRSSSS. The disordered stretch occupies residues 1–21; the sequence is MGSSFRSSSSRNEHEDGGDEA. Residues 11-21 are compositionally biased toward basic and acidic residues; that stretch reads RNEHEDGGDEA. The 273-residue stretch at 140-412 folds into the ABC transporter 1 domain; it reads LKLSGVRTNE…FEECGFQCPE (273 aa). 172 to 179 contributes to the ATP binding site; it reads GPPGCGKT. One can recognise an ABC transmembrane type-2 1 domain in the interval 490 to 702; the sequence is ELFRACISRE…AEIGLSVNEF (213 aa). The next 6 membrane-spanning stretches (helical) occupy residues 509 to 529, 546 to 566, 580 to 600, 626 to 646, 652 to 672, and 738 to 758; these read VYLF…TVFI, CLFF…SMTV, FYPA…LSFF, FMIL…IAAI, AAMT…GFAI, and LSAL…ALSF. The ABC transporter 2 domain occupies 813–1065; the sequence is ITFQDLNYYV…CVIEYFQNIP (253 aa). Residue 858 to 865 participates in ATP binding; that stretch reads GISGAGKT. Residues 1138–1352 form the ABC transmembrane type-2 2 domain; that stretch reads EQFKSCLWKM…TLNLFFSSQY (215 aa). The next 7 helical transmembrane spans lie at 1157 to 1177, 1189 to 1209, 1245 to 1265, 1276 to 1296, 1302 to 1322, 1330 to 1350, and 1385 to 1405; these read YNLM…LLFW, LFTV…NNCT, IPYI…MIGF, LYAM…LISI, VAAI…GFLI, WWVW…FFSS, and ITAI…AFFV.

The protein belongs to the ABC transporter superfamily. ABCG family. PDR (TC 3.A.1.205) subfamily. In terms of tissue distribution, expressed in roots and stems.

Its subcellular location is the membrane. Functionally, may be a general defense protein. The sequence is that of ABC transporter G family member 33 (ABCG33) from Arabidopsis thaliana (Mouse-ear cress).